The following is a 293-amino-acid chain: 4-diphosphocytidyl-2-C-methyl-D-erythritol kinase (293 aa).

Lys-10 is a catalytic residue. An ATP-binding site is contributed by 96–106; the sequence is PIAAGLGGGSS. Asp-138 is an active-site residue.

Belongs to the GHMP kinase family. IspE subfamily.

It carries out the reaction 4-CDP-2-C-methyl-D-erythritol + ATP = 4-CDP-2-C-methyl-D-erythritol 2-phosphate + ADP + H(+). The protein operates within isoprenoid biosynthesis; isopentenyl diphosphate biosynthesis via DXP pathway; isopentenyl diphosphate from 1-deoxy-D-xylulose 5-phosphate: step 3/6. Its function is as follows. Catalyzes the phosphorylation of the position 2 hydroxy group of 4-diphosphocytidyl-2C-methyl-D-erythritol. This is 4-diphosphocytidyl-2-C-methyl-D-erythritol kinase from Caulobacter sp. (strain K31).